Consider the following 414-residue polypeptide: 2,3-bisphosphoglycerate-independent phosphoglycerate mutase (414 aa).

The protein belongs to the BPG-independent phosphoglycerate mutase family. A-PGAM subfamily.

It catalyses the reaction (2R)-2-phosphoglycerate = (2R)-3-phosphoglycerate. It functions in the pathway carbohydrate degradation; glycolysis; pyruvate from D-glyceraldehyde 3-phosphate: step 3/5. Functionally, catalyzes the interconversion of 2-phosphoglycerate and 3-phosphoglycerate. The chain is 2,3-bisphosphoglycerate-independent phosphoglycerate mutase from Saccharolobus islandicus (strain M.14.25 / Kamchatka #1) (Sulfolobus islandicus).